The sequence spans 67 residues: Phycobilisome 7.8 kDa linker polypeptide, allophycocyanin-associated, core (67 aa).

The CpcD-like domain occupies 1-56 (MRMFRITACVPSQTRIRTQRELQNTYFTKLVPYDNWFREQQRIMKMGGKIVKVELA).

Belongs to the phycobilisome linker protein family.

The protein localises to the cellular thylakoid membrane. Rod linker protein, associated with allophycocyanin. Linker polypeptides determine the state of aggregation and the location of the disk-shaped phycobiliprotein units within the phycobilisome and modulate their spectroscopic properties in order to mediate a directed and optimal energy transfer. This is Phycobilisome 7.8 kDa linker polypeptide, allophycocyanin-associated, core (apcC) from Synechocystis sp. (strain PCC 6714) (Aphanocapsa sp. (strain PCC 6714)).